The chain runs to 247 residues: MASQPPEDTAESQASDELECKICYNRYNLKQRKPKVLECCHRVCAKCLYKIIDFGDSPQGVIVCPFCRFETCLPDDEVSSLPDDNNILVNLTCGGKGKKCLPENPTELLLTPKRLASLVSPSHTSSNCLVITIMEVQRESSPSLSSTPVVEFYRPASFDSVTTVSHNWTVWNCTSLLFQTSIRVLVWLLGLLYFSSLPLGIYLLVSKKVTLGVVFVSLVPSSLVILMVYGFCQCVCHEFLDCMAPPS.

An RING-type zinc finger spans residues 20-68 (CKICYNRYNLKQRKPKVLECCHRVCAKCLYKIIDFGDSPQGVIVCPFCR). 2 helical membrane passes run 184 to 204 (VLVW…IYLL) and 211 to 231 (LGVV…VYGF).

Interacts with ATP6V0C. Up-regulated in neuronal cells subjected to cell death-inducing injuries, such as oxygen and glucose deprivation (at protein level). Could be up-regulated in Alzheimer disease brains. Highly expressed in innate immune organs such as lymph nodes and spleen and in immune cells such as macrophages and dendritic cells.

The protein localises to the membrane. It localises to the cytoplasm. The catalysed reaction is S-ubiquitinyl-[E2 ubiquitin-conjugating enzyme]-L-cysteine + [acceptor protein]-L-lysine = [E2 ubiquitin-conjugating enzyme]-L-cysteine + N(6)-ubiquitinyl-[acceptor protein]-L-lysine.. It participates in protein modification; protein ubiquitination. Functionally, E3 ubiquitin-protein ligase that mediates the ubiquitination of ATP6V0C and targets it to degradation via the ubiquitin-proteasome pathway. Also plays a role in the inhibition of TLR-triggered innate immune response by mediating 'Lys'-48-linked ubiquitination and subsequent degradation of NF-kappa-B component RELA. The protein is E3 ubiquitin-protein ligase RNF182 (RNF182) of Homo sapiens (Human).